Consider the following 395-residue polypeptide: Ribosomal RNA large subunit methyltransferase G (395 aa).

Belongs to the methyltransferase superfamily. RlmG family.

The protein localises to the cytoplasm. It catalyses the reaction guanosine(1835) in 23S rRNA + S-adenosyl-L-methionine = N(2)-methylguanosine(1835) in 23S rRNA + S-adenosyl-L-homocysteine + H(+). In terms of biological role, specifically methylates the guanine in position 1835 (m2G1835) of 23S rRNA. This chain is Ribosomal RNA large subunit methyltransferase G, found in Yersinia pseudotuberculosis serotype O:1b (strain IP 31758).